We begin with the raw amino-acid sequence, 421 residues long: Probable G-protein coupled receptor 151 (421 aa).

Residues 1 to 44 lie on the Extracellular side of the membrane; that stretch reads MGKATLAVFADSDSSNMNESFAHLHFAGGYLPSDSKGWRTIIPS. N-linked (GlcNAc...) asparagine glycosylation occurs at Asn18. A helical transmembrane segment spans residues 45–65; that stretch reads LLAAVCLVGFVGNLCVIGLLL. Over 66–74 the chain is Cytoplasmic; it reads HGVWKRKPS. A helical transmembrane segment spans residues 75-95; the sequence is MIHSLILNLSLADISLLLFSA. The Extracellular portion of the chain corresponds to 96 to 122; the sequence is PVRATAYVKGVWDLGWFVCKSSDWFTH. Cys114 and Cys190 form a disulfide bridge. The helical transmembrane segment at 123 to 143 threads the bilayer; it reads MCMAAKSLTFVVVAKVCFMYA. Over 144 to 156 the chain is Cytoplasmic; the sequence is SDPAKPVGTHNCT. The helical transmembrane segment at 157-177 threads the bilayer; the sequence is IWSLLGAIWVVASLLPLPEWF. Residues 178 to 204 are Extracellular-facing; that stretch reads FSTTRHHAGVEMCLVDVPAVAAEFMSL. Residues 205–225 traverse the membrane as a helical segment; that stretch reads FGKLYPLLVFCLPLLLAGFYF. Over 226–258 the chain is Cytoplasmic; it reads WRAYNQCKIRCAKTQNLRNQMRSKQLTVMLLST. A helical membrane pass occupies residues 259–279; that stretch reads AVTSALLWLPEWIAWLWVWHL. Residues 280-289 lie on the Extracellular side of the membrane; it reads KAGGPMPPQG. A helical transmembrane segment spans residues 290–310; it reads FIALSQVLMFSISTVNPLIFL. Over 311 to 421 the chain is Cytoplasmic; it reads MMSEEFKAGL…HEGQETKGCN (111 aa). Disordered regions lie at residues 346-381 and 394-421; these read IETL…TDKV and HERD…KGCN. Composition is skewed to basic and acidic residues over residues 364–379 and 409–421; these read DTDR…ETTD and PWEH…KGCN.

Belongs to the G-protein coupled receptor 1 family. In terms of tissue distribution, exclusively expressed in neurons of the habenular complex. The expression is particularly prominent in the medial habenular nucleus, whereas the lateral habenular nucleus exhibited a lower level of expression.

The protein resides in the cell membrane. In terms of biological role, orphan receptor. This Rattus norvegicus (Rat) protein is Probable G-protein coupled receptor 151 (Gpr151).